The following is a 330-amino-acid chain: 4,5-dihydroxyphthalate decarboxylase (330 aa).

The protein to P.putida DHP decarboxylase.

It carries out the reaction 4,5-dihydroxyphthalate + H(+) = 3,4-dihydroxybenzoate + CO2. It participates in xenobiotic degradation; phthalate degradation; 3,4-dihydroxybenzoate from phthalate: step 3/3. This is 4,5-dihydroxyphthalate decarboxylase (phtD) from Comamonas testosteroni (Pseudomonas testosteroni).